A 359-amino-acid chain; its full sequence is 3-dehydroquinate synthase (359 aa).

Residues 106 to 110 (GVVGD), 130 to 131 (TS), lysine 143, and lysine 152 contribute to the NAD(+) site. 3 residues coordinate Zn(2+): glutamate 185, histidine 246, and histidine 263.

It belongs to the sugar phosphate cyclases superfamily. Dehydroquinate synthase family. Co(2+) serves as cofactor. The cofactor is Zn(2+). Requires NAD(+) as cofactor.

It localises to the cytoplasm. It catalyses the reaction 7-phospho-2-dehydro-3-deoxy-D-arabino-heptonate = 3-dehydroquinate + phosphate. It participates in metabolic intermediate biosynthesis; chorismate biosynthesis; chorismate from D-erythrose 4-phosphate and phosphoenolpyruvate: step 2/7. Its function is as follows. Catalyzes the conversion of 3-deoxy-D-arabino-heptulosonate 7-phosphate (DAHP) to dehydroquinate (DHQ). This is 3-dehydroquinate synthase from Clostridium kluyveri (strain ATCC 8527 / DSM 555 / NBRC 12016 / NCIMB 10680 / K1).